Here is a 761-residue protein sequence, read N- to C-terminus: Xaa-Pro dipeptidyl-peptidase (761 aa).

Active-site charge relay system residues include Ser349, Asp469, and His499.

Belongs to the peptidase S15 family. In terms of assembly, homodimer.

The protein localises to the cytoplasm. The enzyme catalyses Hydrolyzes Xaa-Pro-|- bonds to release unblocked, N-terminal dipeptides from substrates including Ala-Pro-|-p-nitroanilide and (sequentially) Tyr-Pro-|-Phe-Pro-|-Gly-Pro-|-Ile.. In terms of biological role, removes N-terminal dipeptides sequentially from polypeptides having unsubstituted N-termini provided that the penultimate residue is proline. The chain is Xaa-Pro dipeptidyl-peptidase from Streptococcus equi subsp. equi (strain 4047).